Consider the following 163-residue polypeptide: NADH-quinone oxidoreductase subunit I (163 aa).

2 consecutive 4Fe-4S ferredoxin-type domains span residues 53–83 (LRRY…IEAG) and 94–123 (VRYD…EGPN). Residues C63, C66, C69, C73, C103, C106, C109, and C113 each contribute to the [4Fe-4S] cluster site.

This sequence belongs to the complex I 23 kDa subunit family. In terms of assembly, NDH-1 is composed of 14 different subunits. Subunits NuoA, H, J, K, L, M, N constitute the membrane sector of the complex. [4Fe-4S] cluster serves as cofactor.

Its subcellular location is the cell inner membrane. The enzyme catalyses a quinone + NADH + 5 H(+)(in) = a quinol + NAD(+) + 4 H(+)(out). In terms of biological role, NDH-1 shuttles electrons from NADH, via FMN and iron-sulfur (Fe-S) centers, to quinones in the respiratory chain. The immediate electron acceptor for the enzyme in this species is believed to be ubiquinone. Couples the redox reaction to proton translocation (for every two electrons transferred, four hydrogen ions are translocated across the cytoplasmic membrane), and thus conserves the redox energy in a proton gradient. In Brucella canis (strain ATCC 23365 / NCTC 10854 / RM-666), this protein is NADH-quinone oxidoreductase subunit I.